The following is a 378-amino-acid chain: Long-chain-fatty-acid--luciferin-component ligase (378 aa).

This sequence belongs to the LuxE family.

The enzyme catalyses a long-chain fatty acid + L-cysteinyl-[protein] + ATP = an S-(long-chain fatty acyl)-L-cysteinyl-[protein] + AMP + diphosphate. The protein operates within lipid metabolism; fatty acid reduction for biolumincescence. Acyl-protein synthetase activates tetradecanoic acid. It is a component of the fatty acid reductase complex responsible for converting tetradecanoic acid to the aldehyde which serves as substrate in the luciferase-catalyzed reaction. This is Long-chain-fatty-acid--luciferin-component ligase from Aliivibrio fischeri (Vibrio fischeri).